A 392-amino-acid chain; its full sequence is CCA-adding enzyme (392 aa).

Residues S45 and K48 each contribute to the ATP site. Positions 45 and 48 each coordinate CTP. The Mg(2+) site is built by D55, D57, and E106. Residues H129, K148, and Y157 each coordinate ATP. Positions 129, 148, and 157 each coordinate CTP.

Belongs to the tRNA nucleotidyltransferase/poly(A) polymerase family. Archaeal CCA-adding enzyme subfamily. Homodimer. The cofactor is Mg(2+).

It carries out the reaction a tRNA precursor + 2 CTP + ATP = a tRNA with a 3' CCA end + 3 diphosphate. It catalyses the reaction a tRNA with a 3' CCA end + 2 CTP + ATP = a tRNA with a 3' CCACCA end + 3 diphosphate. Its function is as follows. Catalyzes the addition and repair of the essential 3'-terminal CCA sequence in tRNAs without using a nucleic acid template. Adds these three nucleotides in the order of C, C, and A to the tRNA nucleotide-73, using CTP and ATP as substrates and producing inorganic pyrophosphate. tRNA 3'-terminal CCA addition is required both for tRNA processing and repair. Also involved in tRNA surveillance by mediating tandem CCA addition to generate a CCACCA at the 3' terminus of unstable tRNAs. While stable tRNAs receive only 3'-terminal CCA, unstable tRNAs are marked with CCACCA and rapidly degraded. The chain is CCA-adding enzyme from Nanoarchaeum equitans (strain Kin4-M).